We begin with the raw amino-acid sequence, 334 residues long: S-adenosylmethionine:tRNA ribosyltransferase-isomerase (334 aa).

Belongs to the QueA family. As to quaternary structure, monomer.

Its subcellular location is the cytoplasm. The enzyme catalyses 7-aminomethyl-7-carbaguanosine(34) in tRNA + S-adenosyl-L-methionine = epoxyqueuosine(34) in tRNA + adenine + L-methionine + 2 H(+). It participates in tRNA modification; tRNA-queuosine biosynthesis. Transfers and isomerizes the ribose moiety from AdoMet to the 7-aminomethyl group of 7-deazaguanine (preQ1-tRNA) to give epoxyqueuosine (oQ-tRNA). This Rubrobacter xylanophilus (strain DSM 9941 / JCM 11954 / NBRC 16129 / PRD-1) protein is S-adenosylmethionine:tRNA ribosyltransferase-isomerase.